We begin with the raw amino-acid sequence, 182 residues long: NADH-quinone oxidoreductase subunit I (182 aa).

2 consecutive 4Fe-4S ferredoxin-type domains span residues 52–82 (LTRD…LQKA) and 92–121 (DFFR…LTPD). Positions 62, 65, 68, 72, 101, 104, 107, and 111 each coordinate [4Fe-4S] cluster.

Belongs to the complex I 23 kDa subunit family. As to quaternary structure, NDH-1 is composed of 13 different subunits. Subunits NuoA, H, J, K, L, M, N constitute the membrane sector of the complex. Requires [4Fe-4S] cluster as cofactor.

It localises to the cell inner membrane. It carries out the reaction a quinone + NADH + 5 H(+)(in) = a quinol + NAD(+) + 4 H(+)(out). NDH-1 shuttles electrons from NADH, via FMN and iron-sulfur (Fe-S) centers, to quinones in the respiratory chain. The immediate electron acceptor for the enzyme in this species is believed to be ubiquinone. Couples the redox reaction to proton translocation (for every two electrons transferred, four hydrogen ions are translocated across the cytoplasmic membrane), and thus conserves the redox energy in a proton gradient. The protein is NADH-quinone oxidoreductase subunit I of Pseudomonas savastanoi pv. phaseolicola (strain 1448A / Race 6) (Pseudomonas syringae pv. phaseolicola (strain 1448A / Race 6)).